The sequence spans 1491 residues: Membrane-associated guanylate kinase, WW and PDZ domain-containing protein 1 (1491 aa).

The region spanning 17 to 105 (ECTVKRGPQG…AVTFKAVRQG (89 aa)) is the PDZ 1 domain. The region spanning 96 to 287 (AVTFKAVRQG…APITDPSQKF (192 aa)) is the Guanylate kinase-like domain. Position 103 to 110 (103 to 110 (RQGGRLNK)) interacts with ATP. Positions 236 to 267 (AENEEEDDVPEMNSSFTADSGEQEEHTLQETA) are disordered. The WW 1 domain maps to 300–333 (GPLPENWEMAYTENGEVYFIDHNTKTTSWLDPRC). Ser357 bears the Phosphoserine mark. A WW 2 domain is found at 359-392 (LELPAGWEKIEDPVYGIYYVDHINRKTQYENPVL). Over residues 411–421 (QQQQQQQQQQQ) the composition is skewed to low complexity. The disordered stretch occupies residues 411–462 (QQQQQQQQQQQTEEWTEDHSALVPPVIPNHPPSNPEPAREVPLQGKPFFTRN). Over residues 435–445 (PVIPNHPPSNP) the composition is skewed to pro residues. The 83-residue stretch at 472-554 (HTKLRKSSRG…GASVDLELCR (83 aa)) folds into the PDZ 2 domain. A compositionally biased stretch (polar residues) spans 586–600 (QETYDSPASHSSKTG). 3 disordered regions span residues 586–623 (QETYDSPASHSSKTGKVNGMKDARPSSPADVASNSSHG), 720–832 (QRGG…FGEC), and 932–987 (TENE…GGGS). The 79-residue stretch at 643 to 721 (TVHIVKGPMG…GSEVTLLVQR (79 aa)) folds into the PDZ 3 domain. Phosphoserine occurs at positions 730 and 741. The segment covering 742 to 752 (QNSSQHSVSSH) has biased composition (low complexity). The span at 756–766 (HTASPSHSTQV) shows a compositional bias: polar residues. Position 800 is a phosphoserine (Ser800). The PDZ 4 domain maps to 813 to 895 (SGLSKGERER…DELICVDGTP (83 aa)). Residues 939 to 951 (PASSHHSSNQPAS) show a composition bias toward polar residues. A PDZ 5 domain is found at 970 to 1066 (SSGSGSTSGI…DRILAVNGCS (97 aa)). The interval 970 to 1066 (SSGSGSTSGI…DRILAVNGCS (97 aa)) is interaction with FCHSD2. The segment covering 975–987 (STSGIGSGGGGGS) has biased composition (gly residues). Ser1071 is modified (phosphoserine). Positions 1112 to 1130 (TTTHTPSQQGTQETRNTTK) are enriched in polar residues. 2 disordered regions span residues 1112-1143 (TTTHTPSQQGTQETRNTTKPKQESQFEFKAPQ) and 1234-1491 (DGSV…DLSI). The region spanning 1124–1206 (ETRNTTKPKQ…DEILEINGET (83 aa)) is the PDZ 6 domain. Basic and acidic residues-rich tracts occupy residues 1278 to 1338 (DLHK…DAQA), 1354 to 1396 (KRRE…DGSP), and 1403 to 1491 (LERL…DLSI). Residues Ser1361 and Ser1412 each carry the phosphoserine modification.

In terms of assembly, part of a complex composed of AMOTL2, MAGI1 and CDH5, within the complex AMOTL2 acts as a scaffold protein for the interaction of MAGI1 with CDH5. The complex is required for coupling actin fibers to cell junctions in endothelial cells. Interacts through its WW 2 domain with SYNPO and through its PDZ 5 domain with ACTN4. Interacts with cytoplasmic domain of ADGRB1. Interacts via its WW domains with DRPLA. Interacts with ESAM, LRP2 and CXADR. May interact with CTNNB1. Interacts through its PDZ 1 domain with NET1. Interacts with ASIC3 and AMOT. Interacts with FCHSD2. Interacts with IGSF5/JAM4 and through its PDZ 2 and 3 domains with NPHS1 forming a tripartite complex. Interacts with DDN. Interacts with DLL1. Interacts with KCNJ10 and possibly with KCNJ10/KCNJ16 heterodimer; this interaction may facilitate KCNJ10/KCNJ16 potassium channel expression at the basolateral membrane in kidney tubular cells. Interacts with PRRG4 (via cytoplasmic domain). As to quaternary structure, interacts (via PDZ domain) with RAPGEF2. As to expression, widely expressed with the exception of skeletal muscle. Isoform 1, isoform 2 and isoform 6 are highly expressed in colon, kidney, lung, liver, and pancreas. Isoform 5 is predominantly expressed in brain and heart. Isoform 3 and isoform 4 are highly expressed in pancreas and brain.

The protein localises to the cell junction. The protein resides in the tight junction. Its subcellular location is the cell membrane. In terms of biological role, plays a role in coupling actin fibers to cell junctions in endothelial cells, via its interaction with AMOTL2 and CDH5. May regulate acid-induced ASIC3 currents by modulating its expression at the cell surface. In Homo sapiens (Human), this protein is Membrane-associated guanylate kinase, WW and PDZ domain-containing protein 1 (MAGI1).